The following is a 350-amino-acid chain: 3-methylornithine synthase (350 aa).

The 223-residue stretch at 57–279 (NRVFLNCFIY…PKRLIPASLD (223 aa)) folds into the Radical SAM core domain. 2 residues coordinate [4Fe-4S] cluster: cysteine 71 and cysteine 75. Phenylalanine 77 contributes to the S-adenosyl-L-methionine binding site. Cysteine 78 serves as a coordination point for [4Fe-4S] cluster. The (3R)-3-methyl-D-ornithine site is built by aspartate 112, serine 146, and tyrosine 169. Residues glutamate 171, arginine 182, and arginine 190 each contribute to the S-adenosyl-L-methionine site. Position 235 (arginine 235) interacts with (3R)-3-methyl-D-ornithine. Leucine 240 and glutamine 242 together coordinate S-adenosyl-L-methionine. Residues serine 277, threonine 298, and serine 299 each contribute to the (3R)-3-methyl-D-ornithine site.

The protein belongs to the radical SAM superfamily. PylB family. It depends on [4Fe-4S] cluster as a cofactor. S-adenosyl-L-methionine is required as a cofactor.

It catalyses the reaction L-lysine = (3R)-3-methyl-D-ornithine. Its pathway is amino-acid biosynthesis; L-pyrrolysine biosynthesis. Catalyzes the isomerization of L-lysine to (3R)-3-methyl-D-ornithine via a radical-based mechanism, a step in the biosynthesis pathway of pyrrolysine. Also catalyzes the reverse reaction in vitro, converting (3R)-3-methyl-D-ornithine into L-lysine. The protein is 3-methylornithine synthase of Methanosarcina barkeri (strain Fusaro / DSM 804).